We begin with the raw amino-acid sequence, 487 residues long: MSDDKPFLCTAPGCGQRFTNEDHLAVHKHKHEMTLKFGPARNDSVIVADQTPTPTRFLKNCEEVGLFNELASPFENEFKKASEDDIKKMPLDLSPLATPIIRSKIEEPSVVETTHQDSPLPHPESTTNDEKEIPLAQTAQPTSAIVRPASLQVPNVLLTSSDSSVIIQQAVPSPTSSTVITQAPSSNRPIVPVPGPFPLLLHLPNGQTMPVAIPASITSSNVHVPAAVPLVRPVTMVPSVPGIPGPSSPQPVQSEAKMRLKAALTQQHPPVTNGDTVKGHGSGLVRAQSEESRPQSLQQPATSTTETPASPAHTTPQTQNTSGRRRRAANEDPDEKRRKFLERNRAAASRCRQKRKVWVQSLEKKAEDLSSLNGQLQSEVTLLRNEVAQLKQLLLAHKDCPVTAMQKKSGYHTADKDDSSEDLSVPSSPHTEAIQHSSVSTSNGVSSTSKTEAGATSVLTQMADQSTEPALSQIVMAPSSQAQPSGS.

The C2H2-type zinc-finger motif lies at 7 to 31; sequence FLCTAPGCGQRFTNEDHLAVHKHKH. Thr-34 bears the Phosphothreonine; by PKC/PRKCH mark. Ser-44 is subject to Phosphoserine; by VRK1. 2 positions are modified to phosphothreonine: Thr-51 and Thr-53. Thr-55 carries the phosphothreonine; by VRK1 modification. 2 positions are modified to phosphoserine: Ser-72 and Ser-94. Phosphothreonine is present on Thr-98. Ser-103 carries the phosphoserine; by PKC/PRKCA and PKC/PRKCB modification. Disordered stretches follow at residues 107 to 130 and 241 to 355; these read EPSV…TNDE and PGIP…RQKR. Ser-118 bears the Phosphoserine mark. The span at 264–275 shows a compositional bias: polar residues; sequence LTQQHPPVTNGD. Positions 278–281 are essential for its histone acetyltransferase activity; the sequence is KGHG. Residues 300–316 show a composition bias toward low complexity; that stretch reads PATSTTETPASPAHTTP. Ser-310 is modified (phosphoserine). Ser-322 is modified (phosphoserine; by PKC/PRKCA and PKC/PRKCB). The span at 328 to 345 shows a compositional bias: basic and acidic residues; it reads AANEDPDEKRRKFLERNR. The region spanning 334–397 is the bZIP domain; it reads DEKRRKFLER…AQLKQLLLAH (64 aa). A basic motif region spans residues 336–356; sequence KRRKFLERNRAAASRCRQKRK. An N6-acetyllysine modification is found at Lys-339. Ser-349 carries the post-translational modification Phosphoserine; by PKC/PRKCA and PKC/PRKCB. The residue at position 356 (Lys-356) is an N6-acetyllysine. The tract at residues 362–390 is leucine-zipper; sequence LEKKAEDLSSLNGQLQSEVTLLRNEVAQL. The short motif at 387 to 396 is the Nuclear export signal element; sequence VAQLKQLLLA. The disordered stretch occupies residues 407 to 487; that stretch reads KKSGYHTADK…PSSQAQPSGS (81 aa). Phosphoserine occurs at positions 424 and 428. Positions 425 to 436 are enriched in polar residues; that stretch reads VPSSPHTEAIQH. Positions 437–449 are enriched in low complexity; sequence SSVSTSNGVSSTS. The segment covering 457 to 470 has biased composition (polar residues); sequence SVLTQMADQSTEPA. Ser-472 and Ser-480 each carry phosphoserine; by ATM. Residues 478-487 show a composition bias toward polar residues; that stretch reads PSSQAQPSGS.

It belongs to the bZIP family. ATF subfamily. Binds DNA as a dimer and can form a homodimer in the absence of DNA. Can form a heterodimer with JUN. Heterodimerization is essential for its transcriptional activity. Interacts with SMAD3 and SMAD4. Binds through its N-terminal region to UTF1 which acts as a coactivator of ATF2 transcriptional activity. Interacts with the HK1/VDAC1 complex. Interacts with NBN, MRE11, XPO1, KAT5 and CUL3. Post-translationally, phosphorylation of Thr-51 by MAPK14 and MAPK11, and at Thr-53 by MAPK1/ERK2, MAPK3/ERK1, MAPK11, MAPK12 and MAPK14 in response to external stimulus like insulin causes increased transcriptional activity. Phosphorylated by PLK3 following hyperosmotic stress. Also phosphorylated and activated by JNK and CaMK4. ATM-mediated phosphorylation at Ser-472 and Ser-480 stimulates its function in DNA damage response. Phosphorylation at Ser-44, Thr-55 and Ser-103 activates its transcriptional activity. Phosphorylation at Thr-51 or Thr-53 enhances acetylation of histones H2B and H4.

Its subcellular location is the nucleus. It is found in the cytoplasm. The protein resides in the mitochondrion outer membrane. Functionally, transcriptional activator which regulates the transcription of various genes, including those involved in anti-apoptosis, cell growth, and DNA damage response. Dependent on its binding partner, binds to CRE (cAMP response element) consensus sequences (5'-TGACGTCA-3') or to AP-1 (activator protein 1) consensus sequences (5'-TGACTCA-3'). In the nucleus, contributes to global transcription and the DNA damage response, in addition to specific transcriptional activities that are related to cell development, proliferation and death. In the cytoplasm, interacts with and perturbs HK1- and VDAC1-containing complexes at the mitochondrial outer membrane, thereby impairing mitochondrial membrane potential, inducing mitochondrial leakage and promoting cell death. The phosphorylated form (mediated by ATM) plays a role in the DNA damage response and is involved in the ionizing radiation (IR)-induced S phase checkpoint control and in the recruitment of the MRN complex into the IR-induced foci (IRIF). Exhibits histone acetyltransferase (HAT) activity which specifically acetylates histones H2B and H4 in vitro. In concert with CUL3 and RBX1, promotes the degradation of KAT5 thereby attenuating its ability to acetylate and activate ATM. Can elicit oncogenic or tumor suppressor activities depending on the tissue or cell type. The polypeptide is Cyclic AMP-dependent transcription factor ATF-2 (Atf2) (Rattus norvegicus (Rat)).